The primary structure comprises 467 residues: Septin-10 (467 aa).

One can recognise a Septin-type G domain in the interval 63–329; sequence QGFCFNILCV…ELYRRCKLEE (267 aa). The segment at 73–80 is G1 motif; that stretch reads GETGIGKS. GTP is bound by residues 73-80, glycine 128, 209-217, glycine 263, and arginine 278; these read GETGIGKS and KADTVSKTE. The segment at 125 to 128 is G3 motif; the sequence is NTVG. The segment at 208 to 211 is G4 motif; that stretch reads AKAD.

This sequence belongs to the TRAFAC class TrmE-Era-EngA-EngB-Septin-like GTPase superfamily. Septin GTPase family. Septins polymerize into heterooligomeric protein complexes that form filaments, and can associate with cellular membranes, actin filaments and microtubules. GTPase activity is required for filament formation. Interacts with ADGB. Post-translationally, proteolytically cleaved in vitro in a calmodulin-dependent manner.

The protein resides in the cytoplasm. It localises to the cytoskeleton. Its subcellular location is the cell projection. It is found in the cilium. The protein localises to the flagellum. Its function is as follows. Filament-forming cytoskeletal GTPase. May play a role in cytokinesis (Potential). The sequence is that of Septin-10 from Pongo abelii (Sumatran orangutan).